We begin with the raw amino-acid sequence, 113 residues long: Large ribosomal subunit protein uL22 (113 aa).

It belongs to the universal ribosomal protein uL22 family. In terms of assembly, part of the 50S ribosomal subunit.

In terms of biological role, this protein binds specifically to 23S rRNA; its binding is stimulated by other ribosomal proteins, e.g. L4, L17, and L20. It is important during the early stages of 50S assembly. It makes multiple contacts with different domains of the 23S rRNA in the assembled 50S subunit and ribosome. Its function is as follows. The globular domain of the protein is located near the polypeptide exit tunnel on the outside of the subunit, while an extended beta-hairpin is found that lines the wall of the exit tunnel in the center of the 70S ribosome. This chain is Large ribosomal subunit protein uL22, found in Bacillus thuringiensis subsp. konkukian (strain 97-27).